Consider the following 268-residue polypeptide: Octanoyltransferase (268 aa).

Residues 47–243 form the BPL/LPL catalytic domain; sequence PETPDQVWLV…ALCEVLAAHE (197 aa). Residues 87-94, 159-161, and 172-174 contribute to the substrate site; these read RGGQITYH, ALG, and GVS. Catalysis depends on cysteine 190, which acts as the Acyl-thioester intermediate.

Belongs to the LipB family.

It localises to the cytoplasm. The enzyme catalyses octanoyl-[ACP] + L-lysyl-[protein] = N(6)-octanoyl-L-lysyl-[protein] + holo-[ACP] + H(+). Its pathway is protein modification; protein lipoylation via endogenous pathway; protein N(6)-(lipoyl)lysine from octanoyl-[acyl-carrier-protein]: step 1/2. Catalyzes the transfer of endogenously produced octanoic acid from octanoyl-acyl-carrier-protein onto the lipoyl domains of lipoate-dependent enzymes. Lipoyl-ACP can also act as a substrate although octanoyl-ACP is likely to be the physiological substrate. The polypeptide is Octanoyltransferase (Cupriavidus necator (strain ATCC 17699 / DSM 428 / KCTC 22496 / NCIMB 10442 / H16 / Stanier 337) (Ralstonia eutropha)).